The primary structure comprises 120 residues: Nitrogenase-stabilizing/protective protein NifW (120 aa).

The protein belongs to the NifW family. Homotrimer; associates with NifD.

Its function is as follows. May protect the nitrogenase Fe-Mo protein from oxidative damage. The sequence is that of Nitrogenase-stabilizing/protective protein NifW from Rhodospirillum rubrum (strain ATCC 11170 / ATH 1.1.1 / DSM 467 / LMG 4362 / NCIMB 8255 / S1).